Here is a 475-residue protein sequence, read N- to C-terminus: Ribulose bisphosphate carboxylase large chain (475 aa).

A propeptide spanning residues 1–2 (MS) is cleaved from the precursor. Position 3 is an N-acetylproline (proline 3). Lysine 14 is modified (N6,N6,N6-trimethyllysine). Substrate-binding residues include asparagine 123 and threonine 173. The active-site Proton acceptor is the lysine 175. Residue lysine 177 participates in substrate binding. Mg(2+)-binding residues include lysine 201, aspartate 203, and glutamate 204. Lysine 201 carries the post-translational modification N6-carboxylysine. Histidine 294 acts as the Proton acceptor in catalysis. Residues arginine 295, histidine 327, and serine 379 each contribute to the substrate site.

Belongs to the RuBisCO large chain family. Type I subfamily. Heterohexadecamer of 8 large chains and 8 small chains; disulfide-linked. The disulfide link is formed within the large subunit homodimers. Mg(2+) serves as cofactor. Post-translationally, the disulfide bond which can form in the large chain dimeric partners within the hexadecamer appears to be associated with oxidative stress and protein turnover.

It is found in the plastid. Its subcellular location is the chloroplast. It catalyses the reaction 2 (2R)-3-phosphoglycerate + 2 H(+) = D-ribulose 1,5-bisphosphate + CO2 + H2O. The enzyme catalyses D-ribulose 1,5-bisphosphate + O2 = 2-phosphoglycolate + (2R)-3-phosphoglycerate + 2 H(+). Functionally, ruBisCO catalyzes two reactions: the carboxylation of D-ribulose 1,5-bisphosphate, the primary event in carbon dioxide fixation, as well as the oxidative fragmentation of the pentose substrate in the photorespiration process. Both reactions occur simultaneously and in competition at the same active site. In Illicium oligandrum (Star anise), this protein is Ribulose bisphosphate carboxylase large chain.